Here is a 104-residue protein sequence, read N- to C-terminus: Large ribosomal subunit protein uL23 (104 aa).

The protein belongs to the universal ribosomal protein uL23 family. In terms of assembly, part of the 50S ribosomal subunit. Contacts protein L29, and trigger factor when it is bound to the ribosome.

In terms of biological role, one of the early assembly proteins it binds 23S rRNA. One of the proteins that surrounds the polypeptide exit tunnel on the outside of the ribosome. Forms the main docking site for trigger factor binding to the ribosome. The protein is Large ribosomal subunit protein uL23 of Paraburkholderia phymatum (strain DSM 17167 / CIP 108236 / LMG 21445 / STM815) (Burkholderia phymatum).